Consider the following 193-residue polypeptide: ATP-dependent Clp protease proteolytic subunit 1 (193 aa).

Residue S99 is the Nucleophile of the active site. The active site involves H124.

It belongs to the peptidase S14 family. In terms of assembly, fourteen ClpP subunits assemble into 2 heptameric rings which stack back to back to give a disk-like structure with a central cavity, resembling the structure of eukaryotic proteasomes.

Its subcellular location is the cytoplasm. The enzyme catalyses Hydrolysis of proteins to small peptides in the presence of ATP and magnesium. alpha-casein is the usual test substrate. In the absence of ATP, only oligopeptides shorter than five residues are hydrolyzed (such as succinyl-Leu-Tyr-|-NHMec, and Leu-Tyr-Leu-|-Tyr-Trp, in which cleavage of the -Tyr-|-Leu- and -Tyr-|-Trp bonds also occurs).. Cleaves peptides in various proteins in a process that requires ATP hydrolysis. Has a chymotrypsin-like activity. Plays a major role in the degradation of misfolded proteins. The polypeptide is ATP-dependent Clp protease proteolytic subunit 1 (Shouchella clausii (strain KSM-K16) (Alkalihalobacillus clausii)).